The chain runs to 313 residues: tRNA pseudouridine synthase B (313 aa).

Asp-42 functions as the Nucleophile in the catalytic mechanism.

The protein belongs to the pseudouridine synthase TruB family. Type 1 subfamily.

It carries out the reaction uridine(55) in tRNA = pseudouridine(55) in tRNA. Responsible for synthesis of pseudouridine from uracil-55 in the psi GC loop of transfer RNAs. This is tRNA pseudouridine synthase B from Prochlorococcus marinus (strain SARG / CCMP1375 / SS120).